Here is a 146-residue protein sequence, read N- to C-terminus: Hut operon positive regulatory protein (146 aa).

It belongs to the HutP family. In terms of assembly, homohexamer.

Functionally, antiterminator that binds to cis-acting regulatory sequences on the mRNA in the presence of histidine, thereby suppressing transcription termination and activating the hut operon for histidine utilization. The polypeptide is Hut operon positive regulatory protein (Bacillus mycoides (strain KBAB4) (Bacillus weihenstephanensis)).